The sequence spans 984 residues: G patch domain-containing protein TGH homolog (984 aa).

The span at 130–144 shows a compositional bias: basic and acidic residues; sequence EHARKQASKEQKERP. The segment at 130 to 153 is disordered; that stretch reads EHARKQASKEQKERPSAIPGPIPD. A G-patch domain is found at 160–202; it reads TTSIGVKLLMKMGWRQGRSIRDAHADSLYESRREARKAFLALS. Residues 408 to 450 form an SURP motif repeat; the sequence is LIEGCAAMVARCGKHIEDFYKEKSKTNTQFNFLNEGDGCSYYA. Disordered regions lie at residues 464 to 503, 679 to 717, 775 to 806, and 820 to 984; these read QKPDTVQSKSSDKLTAENRGKILGERPLDRSTKSSSSSFP, TRTNEVESSSIAPQHTSVAGATETEAKGAATDPEIESSS, LGLDVPPEKPTPPNVLFRSETPSTANAIGISR, and ESAL…HHKR. Residues 473–495 are compositionally biased toward basic and acidic residues; it reads SSDKLTAENRGKILGERPLDRST. Positions 679-695 are enriched in polar residues; the sequence is TRTNEVESSSIAPQHTS. Low complexity predominate over residues 697–709; it reads AGATETEAKGAAT. Positions 814–859 form a coiled coil; it reads QEIKENESALDKEEIANASADVPSDNVEELGLKYEKQEHRAEKSRS. Over residues 843–858 the composition is skewed to basic and acidic residues; the sequence is LGLKYEKQEHRAEKSR. Composition is skewed to basic residues over residues 882–892, 905–922, and 934–946; these read SRERRSRHKIR, HRSKKRKSHSKHRTRRSR, and TKRKHREKRHHRT. Over residues 947–974 the composition is skewed to basic and acidic residues; it reads RNPDTDSSDHEYEERHKSSSRRSSDKDR. The segment covering 975–984 has biased composition (basic residues); sequence SRRRSRHHKR.

It is found in the nucleus. Its function is as follows. Functions as a component of microRNA (miRNA) and small interfering RNA (siRNA) biogenesis. May assist Dicer-like (DCL) proteins to efficiently process and/or recruit the precursors of miRNAs and siRNAs. The protein is G patch domain-containing protein TGH homolog of Oryza sativa subsp. japonica (Rice).